A 105-amino-acid chain; its full sequence is MYAVIATGGKQYKVGEGEIVRVEKLPGEVGDTVRLDQVLLFSDGENVKVGQPTVENVAVDAQIVEQGKAKKVLVFRFKRRKGYRKKQGHRQPFTALKINKIEAGA.

Belongs to the bacterial ribosomal protein bL21 family. Part of the 50S ribosomal subunit. Contacts protein L20.

Its function is as follows. This protein binds to 23S rRNA in the presence of protein L20. The polypeptide is Large ribosomal subunit protein bL21 (Desulfatibacillum aliphaticivorans).